The chain runs to 155 residues: Troponin C, isoform 2 (155 aa).

EF-hand domains follow at residues 11 to 46, 47 to 82, 87 to 122, and 123 to 155; these read EQIA…MGQP, FDRQ…FIVE, AMQK…LDDQ, and LTEQ…MTGE. 5 residues coordinate Ca(2+): D60, D62, S64, R66, and E71. The Ca(2+) site is built by D136, D138, S140, T142, and E147.

This sequence belongs to the troponin C family. In terms of tissue distribution, accumulates almost exclusively in larval muscles.

The polypeptide is Troponin C, isoform 2 (TpnC47D) (Drosophila melanogaster (Fruit fly)).